Reading from the N-terminus, the 973-residue chain is UvrABC system protein A (973 aa).

34 to 41 (GLSGSGKS) contacts ATP. 2 ABC transporter domains span residues 330–609 (WAKS…PNSI) and 629–958 (AKKN…QFLK). 662-669 (GVSGGGKS) is a binding site for ATP. A C4-type zinc finger spans residues 761 to 787 (CEACQGDGVIKIEMHFLPDVYVTCDVC).

This sequence belongs to the ABC transporter superfamily. UvrA family. In terms of assembly, forms a heterotetramer with UvrB during the search for lesions.

Its subcellular location is the cytoplasm. In terms of biological role, the UvrABC repair system catalyzes the recognition and processing of DNA lesions. UvrA is an ATPase and a DNA-binding protein. A damage recognition complex composed of 2 UvrA and 2 UvrB subunits scans DNA for abnormalities. When the presence of a lesion has been verified by UvrB, the UvrA molecules dissociate. This chain is UvrABC system protein A, found in Mesorhizobium japonicum (strain LMG 29417 / CECT 9101 / MAFF 303099) (Mesorhizobium loti (strain MAFF 303099)).